The following is a 391-amino-acid chain: Leucine aminopeptidase 1 (391 aa).

The first 19 residues, 1-19, serve as a signal peptide directing secretion; the sequence is MKLSIALALGATASTGVLA. Residues 20-91 constitute a propeptide that is removed on maturation; it reads AVVPQQEPLI…YPTLHAGSYV (72 aa). Asn183 carries N-linked (GlcNAc...) asparagine glycosylation. The Zn(2+) site is built by His191 and Asp210. Asn235 carries an N-linked (GlcNAc...) asparagine glycan. 2 residues coordinate Zn(2+): Glu249 and Asp276. A disulfide bridge connects residues Cys325 and Cys329. His358 provides a ligand contact to Zn(2+).

Belongs to the peptidase M28 family. M28E subfamily. Monomer. Requires Zn(2+) as cofactor.

It is found in the secreted. In terms of biological role, extracellular aminopeptidase that allows assimilation of proteinaceous substrates. In Aspergillus niger (strain ATCC MYA-4892 / CBS 513.88 / FGSC A1513), this protein is Leucine aminopeptidase 1 (lap1).